The chain runs to 128 residues: Prefoldin subunit 1 (128 aa).

Coiled coils occupy residues 17–37 and 81–115; these read MIELTGKLKQVQNQMRNKEGD and LKDSEAAVASLQTSKEYLEKQVAEVENNLRELLQQ.

This sequence belongs to the prefoldin subunit beta family. Heterohexamer of two PFD-alpha type and four PFD-beta type subunits forming prefoldin co-chaperone complex. Interacts with LSM8, a specific subunit of the LSM2-8 complex, which is a core component of the spliceosome.

Its subcellular location is the cytoplasm. It is found in the nucleus. Functionally, binds specifically to cytosolic chaperonin (c-CPN) and transfers target proteins to it. Binds to nascent polypeptide chain and promotes folding in an environment in which there are many competing pathways for nonnative proteins. Together with other chaperonins, contribute to the regulation of gene expression by modulating the spliceosome function on pre-mRNA splicing post-transcriptionally by acting as a co-chaperone of Hsp90 to control levels of LSM8. Required for microtubules (MTs) organization and dynamicity. Involved in the process leading to microtubules dissociation in response to gibberellic acid (GA) probably due to the DELLA proteins-mediated translocation of the prefoldin co-chaperone complex from the cytoplasm to the nucleus. This is Prefoldin subunit 1 from Arabidopsis thaliana (Mouse-ear cress).